The following is a 142-amino-acid chain: Large ribosomal subunit protein uL11 (142 aa).

The protein belongs to the universal ribosomal protein uL11 family. As to quaternary structure, part of the ribosomal stalk of the 50S ribosomal subunit. Interacts with L10 and the large rRNA to form the base of the stalk. L10 forms an elongated spine to which L12 dimers bind in a sequential fashion forming a multimeric L10(L12)X complex. Post-translationally, one or more lysine residues are methylated.

In terms of biological role, forms part of the ribosomal stalk which helps the ribosome interact with GTP-bound translation factors. The sequence is that of Large ribosomal subunit protein uL11 from Vibrio vulnificus (strain YJ016).